A 364-amino-acid polypeptide reads, in one-letter code: tRNA/tmRNA (uracil-C(5))-methyltransferase (364 aa).

The S-adenosyl-L-methionine site is built by Q186, Y214, N219, E235, and D295. The active-site Nucleophile is the C320. The active-site Proton acceptor is the E354.

Belongs to the class I-like SAM-binding methyltransferase superfamily. RNA M5U methyltransferase family. TrmA subfamily.

It catalyses the reaction uridine(54) in tRNA + S-adenosyl-L-methionine = 5-methyluridine(54) in tRNA + S-adenosyl-L-homocysteine + H(+). The catalysed reaction is uridine(341) in tmRNA + S-adenosyl-L-methionine = 5-methyluridine(341) in tmRNA + S-adenosyl-L-homocysteine + H(+). In terms of biological role, dual-specificity methyltransferase that catalyzes the formation of 5-methyluridine at position 54 (m5U54) in all tRNAs, and that of position 341 (m5U341) in tmRNA (transfer-mRNA). In Azoarcus sp. (strain BH72), this protein is tRNA/tmRNA (uracil-C(5))-methyltransferase.